The primary structure comprises 493 residues: Glutamyl-tRNA(Gln) amidotransferase subunit A (493 aa).

Residues Lys-78 and Ser-158 each act as charge relay system in the active site. Ser-182 (acyl-ester intermediate) is an active-site residue.

The protein belongs to the amidase family. GatA subfamily. In terms of assembly, heterotrimer of A, B and C subunits.

It catalyses the reaction L-glutamyl-tRNA(Gln) + L-glutamine + ATP + H2O = L-glutaminyl-tRNA(Gln) + L-glutamate + ADP + phosphate + H(+). In terms of biological role, allows the formation of correctly charged Gln-tRNA(Gln) through the transamidation of misacylated Glu-tRNA(Gln) in organisms which lack glutaminyl-tRNA synthetase. The reaction takes place in the presence of glutamine and ATP through an activated gamma-phospho-Glu-tRNA(Gln). In Rickettsia bellii (strain OSU 85-389), this protein is Glutamyl-tRNA(Gln) amidotransferase subunit A.